A 356-amino-acid polypeptide reads, in one-letter code: GATA zinc finger domain-containing protein 17 (356 aa).

A coiled-coil region spans residues 91-119 (LKEFDALEASLNAELECLELQYSSDTSEL). The span at 158-188 (TASTSTSTPTNTTTTTTTTSNSLTKNNNSAL) shows a compositional bias: low complexity. Residues 158–294 (TASTSTSTPT…DITEESKVKE (137 aa)) form a disordered region. Positions 206–228 (SSDDEEDDQKDDQDKDDSDEDNV) are enriched in acidic residues. The span at 260-284 (TAITTTTTPITTTDSNIIGTTTTTD) shows a compositional bias: low complexity. The segment at 304 to 331 (CYVCKVTETPYWRRGTDNGVVVDLCNEC) adopts a GATA-type zinc-finger fold.

This chain is GATA zinc finger domain-containing protein 17 (gtaQ), found in Dictyostelium discoideum (Social amoeba).